Here is a 295-residue protein sequence, read N- to C-terminus: Acetylglutamate kinase (295 aa).

Residues 64 to 65 (GG), arginine 86, and asparagine 190 contribute to the substrate site.

The protein belongs to the acetylglutamate kinase family. ArgB subfamily.

It localises to the cytoplasm. It catalyses the reaction N-acetyl-L-glutamate + ATP = N-acetyl-L-glutamyl 5-phosphate + ADP. The protein operates within amino-acid biosynthesis; L-arginine biosynthesis; N(2)-acetyl-L-ornithine from L-glutamate: step 2/4. In terms of biological role, catalyzes the ATP-dependent phosphorylation of N-acetyl-L-glutamate. The polypeptide is Acetylglutamate kinase (Heliobacterium modesticaldum (strain ATCC 51547 / Ice1)).